A 231-amino-acid polypeptide reads, in one-letter code: Orotidine 5'-phosphate decarboxylase (231 aa).

Substrate contacts are provided by residues D12, K34, 61–70 (DLKFHDIPNT), T120, R181, Q190, G210, and R211. Catalysis depends on K63, which acts as the Proton donor.

Belongs to the OMP decarboxylase family. Type 1 subfamily. As to quaternary structure, homodimer.

The enzyme catalyses orotidine 5'-phosphate + H(+) = UMP + CO2. Its pathway is pyrimidine metabolism; UMP biosynthesis via de novo pathway; UMP from orotate: step 2/2. Catalyzes the decarboxylation of orotidine 5'-monophosphate (OMP) to uridine 5'-monophosphate (UMP). The polypeptide is Orotidine 5'-phosphate decarboxylase (Alcanivorax borkumensis (strain ATCC 700651 / DSM 11573 / NCIMB 13689 / SK2)).